Here is a 343-residue protein sequence, read N- to C-terminus: 4-hydroxy-2-oxovalerate aldolase 1 (343 aa).

The Pyruvate carboxyltransferase domain occupies 8–260; that stretch reads VTVHDMTLRD…ETGVDVAKIT (253 aa). A substrate-binding site is contributed by 16–17; sequence RD. Aspartate 17 is a Mn(2+) binding site. The Proton acceptor role is filled by histidine 20. 2 residues coordinate substrate: serine 170 and histidine 199. Positions 199 and 201 each coordinate Mn(2+). A substrate-binding site is contributed by tyrosine 290.

This sequence belongs to the 4-hydroxy-2-oxovalerate aldolase family.

The catalysed reaction is (S)-4-hydroxy-2-oxopentanoate = acetaldehyde + pyruvate. In Dechloromonas aromatica (strain RCB), this protein is 4-hydroxy-2-oxovalerate aldolase 1.